The following is a 660-amino-acid chain: T-box protein H15 (660 aa).

Over residues 1-11 the composition is skewed to polar residues; the sequence is MLLSNQPANTK. Disordered regions lie at residues 1 to 72, 90 to 122, and 169 to 266; these read MLLS…NHNQ, GGNA…DDVD, and QQQQ…PKIV. The span at 12–22 shows a compositional bias: low complexity; it reads PQQTPSPSQTQ. Residues 23–33 are compositionally biased toward polar residues; that stretch reads NFKSKLQQQIV. Residues 35 to 47 show a composition bias toward low complexity; that stretch reads AAAAAAANIANGS. The segment covering 48 to 71 has biased composition (basic residues); sequence SHHHHHQNHHHHHPLNNHHNHNHN. 2 stretches are compositionally biased toward low complexity: residues 93-108 and 169-179; these read APSS…SPAS and QQQQQQQQQRQ. The segment covering 180-198 has biased composition (basic residues); that stretch reads QTHHHATTGKQQRQHHNHH. The segment covering 199 to 233 has biased composition (low complexity); it reads SSNTNNSSNSGNSNTNSKSSSQRGRSAAAVGAAAT. Over residues 234 to 243 the composition is skewed to pro residues; it reads PSPPPPPPSQ. Residues 286–472 constitute a DNA-binding region (T-box); it reads LWDKFHELGT…SNPFAKGFRD (187 aa). A disordered region spans residues 598 to 660; that stretch reads NRTPPPSMAV…PPASNRAESP (63 aa). Positions 600-613 are enriched in pro residues; sequence TPPPSMAVAPPAPA. Residues 614 to 624 show a composition bias toward low complexity; that stretch reads TPTSSCGSASP. Polar residues predominate over residues 643 to 660; that stretch reads QVPQHQASPPASNRAESP.

It localises to the nucleus. The chain is T-box protein H15 (H15) from Drosophila melanogaster (Fruit fly).